Here is a 147-residue protein sequence, read N- to C-terminus: Fluoride-specific ion channel FluC 1 (147 aa).

A run of 4 helical transmembrane segments spans residues 29 to 49 (YVYIFIGGALGALLRYLISFL), 61 to 81 (IANLTGAFVMGLLTALTIAFF), 90 to 110 (AITTGFLGALTTFSTFQLELI), and 118 to 138 (FITLLLYAVTSYVFGILLCYV). The Na(+) site is built by Gly-97 and Thr-100.

It belongs to the fluoride channel Fluc/FEX (TC 1.A.43) family.

The protein resides in the cell membrane. It catalyses the reaction fluoride(in) = fluoride(out). Its activity is regulated as follows. Na(+) is not transported, but it plays an essential structural role and its presence is essential for fluoride channel function. Functionally, fluoride-specific ion channel. Important for reducing fluoride concentration in the cell, thus reducing its toxicity. The protein is Fluoride-specific ion channel FluC 1 of Staphylococcus aureus (strain MRSA252).